We begin with the raw amino-acid sequence, 689 residues long: FAST kinase domain-containing protein 2, mitochondrial (689 aa).

2 positions are modified to phosphoserine: Ser-113 and Ser-126. The region spanning 617–674 (VAVLCVPKSVYCLNSCHPRGLMAMKIRHLNVMGFHVILIHNWELKKLKMEDAVTFVRK) is the RAP domain.

This sequence belongs to the FAST kinase family. Monomer. Found in a complex with GRSF1, DDX28, DHX30 and FASTKD5. Associates with the 16S mitochondrial rRNA (16S mt-rRNA). Forms a regulatory protein-RNA complex, consisting of RCC1L, NGRN, RPUSD3, RPUSD4, TRUB2, FASTKD2 and 16S mt-rRNA. As to expression, ubiquitously expressed. Expression detected in spleen, testis, colon, heart, smooth muscle, kidney, brain, lung, liver, brown and white adipose tissue with highest expression in testis, heart and smooth muscle.

The protein resides in the mitochondrion matrix. Its subcellular location is the mitochondrion nucleoid. In terms of biological role, plays an important role in assembly of the mitochondrial large ribosomal subunit. As a component of a functional protein-RNA module, consisting of RCC1L, NGRN, RPUSD3, RPUSD4, TRUB2, FASTKD2 and 16S mitochondrial ribosomal RNA (16S mt-rRNA), controls 16S mt-rRNA abundance and is required for intra-mitochondrial translation. May play a role in mitochondrial apoptosis. This chain is FAST kinase domain-containing protein 2, mitochondrial (Fastkd2), found in Mus musculus (Mouse).